The chain runs to 329 residues: Alpha/beta hydrolase domain-containing protein 17C (329 aa).

Positions 53-79 (GASAPAPAQATAAAAAAQPAPQQPEEG) are enriched in low complexity. The segment at 53–85 (GASAPAPAQATAAAAAAQPAPQQPEEGAGAGPG) is disordered. Active-site charge relay system residues include serine 211, aspartate 276, and histidine 305.

It belongs to the AB hydrolase superfamily. ABHD17 family. In terms of processing, palmitoylated on cysteine residues located in a cysteine cluster at the N-terminus which promotes membrane localization. Palmitoylation is required for post-synaptic localization and for depalmitoylating activity towards DLG4/PSD95.

The protein resides in the recycling endosome membrane. It localises to the cell projection. The protein localises to the dendritic spine. It is found in the postsynaptic density membrane. It carries out the reaction S-hexadecanoyl-L-cysteinyl-[protein] + H2O = L-cysteinyl-[protein] + hexadecanoate + H(+). Inhibited by palmostatin-B. Hydrolyzes fatty acids from S-acylated cysteine residues in proteins. Has depalmitoylating activity towards NRAS and DLG4/PSD95. The sequence is that of Alpha/beta hydrolase domain-containing protein 17C from Homo sapiens (Human).